Reading from the N-terminus, the 169-residue chain is Capsid protein (169 aa).

The protein belongs to the nanoviridae capsid protein family.

It is found in the virion. This Subterranean clover stunt virus (strain F) (SCSV) protein is Capsid protein (DNA-S).